Here is a 297-residue protein sequence, read N- to C-terminus: Diaminopimelate epimerase (297 aa).

Substrate-binding residues include N13, Q46, and N66. Residue C76 is the Proton donor of the active site. Substrate contacts are provided by residues 77 to 78 (GN), N174, N207, and 225 to 226 (ER). C234 functions as the Proton acceptor in the catalytic mechanism. 235–236 (GT) is a substrate binding site.

Belongs to the diaminopimelate epimerase family. As to quaternary structure, homodimer.

It localises to the cytoplasm. The catalysed reaction is (2S,6S)-2,6-diaminopimelate = meso-2,6-diaminopimelate. It functions in the pathway amino-acid biosynthesis; L-lysine biosynthesis via DAP pathway; DL-2,6-diaminopimelate from LL-2,6-diaminopimelate: step 1/1. Catalyzes the stereoinversion of LL-2,6-diaminopimelate (L,L-DAP) to meso-diaminopimelate (meso-DAP), a precursor of L-lysine and an essential component of the bacterial peptidoglycan. In Leptothrix cholodnii (strain ATCC 51168 / LMG 8142 / SP-6) (Leptothrix discophora (strain SP-6)), this protein is Diaminopimelate epimerase.